The sequence spans 303 residues: Porphobilinogen deaminase (303 aa).

Cysteine 235 is modified (S-(dipyrrolylmethanemethyl)cysteine).

The protein belongs to the HMBS family. In terms of assembly, monomer. Dipyrromethane serves as cofactor.

It catalyses the reaction 4 porphobilinogen + H2O = hydroxymethylbilane + 4 NH4(+). Its pathway is porphyrin-containing compound metabolism; protoporphyrin-IX biosynthesis; coproporphyrinogen-III from 5-aminolevulinate: step 2/4. Functionally, tetrapolymerization of the monopyrrole PBG into the hydroxymethylbilane pre-uroporphyrinogen in several discrete steps. This Campylobacter fetus subsp. fetus (strain 82-40) protein is Porphobilinogen deaminase.